The chain runs to 524 residues: Metal transporter Nramp2 (524 aa).

Positions 34 to 58 are disordered; sequence AYDSDDKVSIAVSDSDSEDGGGGGG. 12 helical membrane passes run 70–90, 98–118, 155–175, 179–199, 207–227, 253–273, 295–315, 341–361, 389–409, 420–440, 457–477, and 486–506; these read LWRFTGPGFLMCIAFLDPGNL, AAAGYQLLWLLLWATVMGALV, LALVGADIQEVIGSAIAIKIL, TVPLWGGVVITAFDCFIFLFL, LEAFFGVLIAVMAVSFAIMFG, AVGIVGCIIMPHNVFLHSALV, IESILALIVSFFINICVTTVF, YGTAFFPILYIWAIGLLASGQ, AMITRSFAIIPTMIVALFFDT, ALNVLQSIQIPFALIPLITLV, VISWIVTVFLMLINGYLILSF, and LVRSSLCVVLAVYLAFIVYLI.

This sequence belongs to the NRAMP (TC 2.A.55) family.

It is found in the membrane. Functionally, probable metal transporter. In Oryza sativa subsp. japonica (Rice), this protein is Metal transporter Nramp2 (NRAMP2).